Consider the following 335-residue polypeptide: Taste receptor type 2 member 119 (335 aa).

At 1 to 7 (MMEGHIL) the chain is on the extracellular side. A helical membrane pass occupies residues 8–28 (FFFLVVMVQFVTGVLANGLIV). The Cytoplasmic segment spans residues 29–43 (VVHAIDLIMWKKMAP). The helical transmembrane segment at 44–64 (LDLLLFCLATSRIILQLCILF) threads the bilayer. Topologically, residues 65-81 (AQLCLFSLVRHTLFEDN) are extracellular. Asparagine 81 is a glycosylation site (N-linked (GlcNAc...) asparagine). The helical transmembrane segment at 82–102 (ITFVFIINELSLWFATWLGVF) threads the bilayer. Topologically, residues 103–124 (YCAKIATIPHPLFLWLKMRISR) are cytoplasmic. A helical membrane pass occupies residues 125–145 (LVPWLILGSVLYVIITTFIHS). Topologically, residues 146–176 (RETSAILKPIFISLFPKNATQVGTGHATLLS) are extracellular. A glycan (N-linked (GlcNAc...) asparagine) is linked at asparagine 163. A helical membrane pass occupies residues 177–197 (VLVLGLTLPLFIFTVAVLLLI). The Cytoplasmic portion of the chain corresponds to 198 to 224 (YSLWNYSRQMRTMVGTREYSGHAHISA). The chain crosses the membrane as a helical span at residues 225–245 (MLSILSFLILYLSHYMVAVLI). At 246-256 (STQVLYLGSRT) the chain is on the extracellular side. A helical transmembrane segment spans residues 257–277 (FVFCLLVIGMYPSIHSIVLIL). Over 278–335 (GNPKLKRNAKMFIVHCKCCHCTRAWVTSRSPRLSDLPVPPTHPSANKTSCSEACIMPS) the chain is Cytoplasmic. Residues 308 to 327 (PRLSDLPVPPTHPSANKTSC) form a disordered region.

It belongs to the G-protein coupled receptor T2R family. As to expression, expressed in subsets of taste receptor cells of the tongue and palate epithelium and exclusively in gustducin-positive cells. Expressed in the duodenum, antrum and fundus (part of the stomach).

The protein localises to the membrane. Functionally, gustducin-coupled receptor implicated in the perception of bitter compounds in the oral cavity and the gastrointestinal tract. Signals through PLCB2 and the calcium-regulated cation channel TRPM5. The sequence is that of Taste receptor type 2 member 119 (Tas2r119) from Rattus norvegicus (Rat).